Consider the following 173-residue polypeptide: MAAMASLGALALLLLSSLSRCSAEACLEPQITPSYYTTSDAVISTETVFIVEISLTCKNRVQNMALYADVGGKQFPVTRGQDVGRYQVSWSLDHKSAHAGTYEVRFFDEESYSLLRKAQRNNEDISIIPPLFTVSVDHRGTWNGPWVSTEVLAAAIGLVIYYLAFSAKSHIQA.

The first 23 residues, 1 to 23 (MAAMASLGALALLLLSSLSRCSA), serve as a signal peptide directing secretion. The Lumenal segment spans residues 24-144 (EACLEPQITP…SVDHRGTWNG (121 aa)). Cysteines 26 and 57 form a disulfide. A Glycyl lysine isopeptide (Lys-Gly) (interchain with G-Cter in ubiquitin) cross-link involves residue K73. Residues 145–165 (PWVSTEVLAAAIGLVIYYLAF) traverse the membrane as a helical segment. Topologically, residues 166 to 173 (SAKSHIQA) are cytoplasmic.

This sequence belongs to the TRAP-delta family. Heterotetramer of TRAP-alpha, TRAP-beta, TRAP-delta and TRAP-gamma.

The protein resides in the endoplasmic reticulum membrane. TRAP proteins are part of a complex whose function is to bind calcium to the ER membrane and thereby regulate the retention of ER resident proteins. The polypeptide is Translocon-associated protein subunit delta (SSR4) (Homo sapiens (Human)).